A 190-amino-acid chain; its full sequence is Isopentenyl-diphosphate Delta-isomerase (190 aa).

Residues histidine 27 and histidine 34 each contribute to the Mn(2+) site. Residues 32–171 form the Nudix hydrolase domain; sequence PLHFAFSSYI…PFVFSPWMVD (140 aa). Cysteine 69 is a catalytic residue. Cysteine 69 is a Mg(2+) binding site. Histidine 71 serves as a coordination point for Mn(2+). Mg(2+) is bound at residue glutamate 89. Residues glutamate 119 and glutamate 121 each coordinate Mn(2+). The active site involves glutamate 121.

This sequence belongs to the IPP isomerase type 1 family. It depends on Mg(2+) as a cofactor. Mn(2+) serves as cofactor.

The protein resides in the cytoplasm. The enzyme catalyses isopentenyl diphosphate = dimethylallyl diphosphate. The protein operates within isoprenoid biosynthesis; dimethylallyl diphosphate biosynthesis; dimethylallyl diphosphate from isopentenyl diphosphate: step 1/1. Functionally, catalyzes the 1,3-allylic rearrangement of the homoallylic substrate isopentenyl (IPP) to its highly electrophilic allylic isomer, dimethylallyl diphosphate (DMAPP). The chain is Isopentenyl-diphosphate Delta-isomerase from Corynebacterium efficiens (strain DSM 44549 / YS-314 / AJ 12310 / JCM 11189 / NBRC 100395).